The sequence spans 162 residues: Large ribosomal subunit protein uL10 (162 aa).

Belongs to the universal ribosomal protein uL10 family. In terms of assembly, part of the ribosomal stalk of the 50S ribosomal subunit. The N-terminus interacts with L11 and the large rRNA to form the base of the stalk. The C-terminus forms an elongated spine to which L12 dimers bind in a sequential fashion forming a multimeric L10(L12)X complex.

Functionally, forms part of the ribosomal stalk, playing a central role in the interaction of the ribosome with GTP-bound translation factors. In Aliarcobacter butzleri (strain RM4018) (Arcobacter butzleri), this protein is Large ribosomal subunit protein uL10.